Consider the following 274-residue polypeptide: Large ribosomal subunit protein uL2 (274 aa).

Disordered regions lie at residues 28–54 and 224–274; these read APHAPLLEKKSKTGGRNNNGRITTRHI and VAMN…RRRK. Basic and acidic residues predominate over residues 263-274; the sequence is KRTDKMIVRRRK.

The protein belongs to the universal ribosomal protein uL2 family. Part of the 50S ribosomal subunit. Forms a bridge to the 30S subunit in the 70S ribosome.

Its function is as follows. One of the primary rRNA binding proteins. Required for association of the 30S and 50S subunits to form the 70S ribosome, for tRNA binding and peptide bond formation. It has been suggested to have peptidyltransferase activity; this is somewhat controversial. Makes several contacts with the 16S rRNA in the 70S ribosome. This Pseudomonas fluorescens (strain SBW25) protein is Large ribosomal subunit protein uL2.